Consider the following 269-residue polypeptide: Ribosomal RNA small subunit methyltransferase J (269 aa).

Residues 125-126 (ER) and aspartate 179 each bind S-adenosyl-L-methionine.

The protein belongs to the methyltransferase superfamily. RsmJ family.

Its subcellular location is the cytoplasm. It carries out the reaction guanosine(1516) in 16S rRNA + S-adenosyl-L-methionine = N(2)-methylguanosine(1516) in 16S rRNA + S-adenosyl-L-homocysteine + H(+). Functionally, specifically methylates the guanosine in position 1516 of 16S rRNA. In Pseudomonas syringae pv. syringae (strain B728a), this protein is Ribosomal RNA small subunit methyltransferase J.